Consider the following 389-residue polypeptide: tRNA (adenine(58)-N(1))-methyltransferase catalytic subunit TRM61 (389 aa).

Residues 112–114 (SGS), Glu-133, Arg-138, 160–161 (DV), and Asp-181 contribute to the S-adenosyl-L-methionine site. 2 disordered regions span residues 278 to 313 (TETG…GQKI) and 364 to 389 (ERCP…RTEA). The span at 280–289 (TGVEEEESDE) shows a compositional bias: acidic residues. Positions 290-301 (RDAKRSKTESGH) are enriched in basic and acidic residues. Residues 368–389 (ETSTEGAEASTEATEAPARTEA) show a composition bias toward low complexity.

It belongs to the class I-like SAM-binding methyltransferase superfamily. TRM61 family. Heterotetramer; composed of two copies of TRM6 and two copies of TRM61.

It localises to the nucleus. It carries out the reaction adenosine(58) in tRNA + S-adenosyl-L-methionine = N(1)-methyladenosine(58) in tRNA + S-adenosyl-L-homocysteine + H(+). Its function is as follows. Catalytic subunit of tRNA (adenine-N(1)-)-methyltransferase, which catalyzes the formation of N(1)-methyladenine at position 58 (m1A58) in initiator methionyl-tRNA. In Yarrowia lipolytica (strain CLIB 122 / E 150) (Yeast), this protein is tRNA (adenine(58)-N(1))-methyltransferase catalytic subunit TRM61 (TRM61).